We begin with the raw amino-acid sequence, 190 residues long: Cell division protein SepF (190 aa).

The protein belongs to the SepF family. Homodimer. Interacts with FtsZ.

It localises to the cytoplasm. In terms of biological role, cell division protein that is part of the divisome complex and is recruited early to the Z-ring. Probably stimulates Z-ring formation, perhaps through the cross-linking of FtsZ protofilaments. Its function overlaps with FtsA. The protein is Cell division protein SepF of Synechococcus sp. (strain WH7803).